A 452-amino-acid polypeptide reads, in one-letter code: tRNA modification GTPase MnmE (452 aa).

(6S)-5-formyl-5,6,7,8-tetrahydrofolate-binding residues include Arg-21, Glu-78, and Lys-118. Positions 214-375 (GMKVVIAGRP…LREHLKQAMG (162 aa)) constitute a TrmE-type G domain. Asn-224 lines the K(+) pocket. GTP is bound by residues 224-229 (NAGKSS), 243-249 (TDIAGTT), and 268-271 (DTAG). A Mg(2+)-binding site is contributed by Ser-228. K(+) contacts are provided by Thr-243, Ile-245, and Thr-248. A Mg(2+)-binding site is contributed by Thr-249. Lys-452 contributes to the (6S)-5-formyl-5,6,7,8-tetrahydrofolate binding site.

Belongs to the TRAFAC class TrmE-Era-EngA-EngB-Septin-like GTPase superfamily. TrmE GTPase family. Homodimer. Heterotetramer of two MnmE and two MnmG subunits. K(+) serves as cofactor.

The protein localises to the cytoplasm. In terms of biological role, exhibits a very high intrinsic GTPase hydrolysis rate. Involved in the addition of a carboxymethylaminomethyl (cmnm) group at the wobble position (U34) of certain tRNAs, forming tRNA-cmnm(5)s(2)U34. This is tRNA modification GTPase MnmE from Haemophilus influenzae (strain PittEE).